The chain runs to 171 residues: Shikimate kinase (171 aa).

14-19 (GAGKST) provides a ligand contact to ATP. Residue serine 18 coordinates Mg(2+). Positions 36, 60, and 82 each coordinate substrate. ATP is bound at residue arginine 120. Arginine 139 provides a ligand contact to substrate. Residue glutamine 156 coordinates ATP.

It belongs to the shikimate kinase family. As to quaternary structure, monomer. The cofactor is Mg(2+).

The protein resides in the cytoplasm. The enzyme catalyses shikimate + ATP = 3-phosphoshikimate + ADP + H(+). It participates in metabolic intermediate biosynthesis; chorismate biosynthesis; chorismate from D-erythrose 4-phosphate and phosphoenolpyruvate: step 5/7. In terms of biological role, catalyzes the specific phosphorylation of the 3-hydroxyl group of shikimic acid using ATP as a cosubstrate. The protein is Shikimate kinase of Shewanella putrefaciens (strain CN-32 / ATCC BAA-453).